The chain runs to 178 residues: Large ribosomal subunit protein uL5 (178 aa).

The protein belongs to the universal ribosomal protein uL5 family. In terms of assembly, part of the 50S ribosomal subunit; part of the 5S rRNA/L5/L18/L25 subcomplex. Contacts the 5S rRNA and the P site tRNA. Forms a bridge to the 30S subunit in the 70S ribosome.

Its function is as follows. This is one of the proteins that bind and probably mediate the attachment of the 5S RNA into the large ribosomal subunit, where it forms part of the central protuberance. In the 70S ribosome it contacts protein S13 of the 30S subunit (bridge B1b), connecting the 2 subunits; this bridge is implicated in subunit movement. Contacts the P site tRNA; the 5S rRNA and some of its associated proteins might help stabilize positioning of ribosome-bound tRNAs. In Acinetobacter baylyi (strain ATCC 33305 / BD413 / ADP1), this protein is Large ribosomal subunit protein uL5.